We begin with the raw amino-acid sequence, 393 residues long: NAD(P)H-quinone oxidoreductase subunit H, chloroplastic (393 aa).

The protein belongs to the complex I 49 kDa subunit family. In terms of assembly, NDH is composed of at least 16 different subunits, 5 of which are encoded in the nucleus.

The protein resides in the plastid. It is found in the chloroplast thylakoid membrane. The catalysed reaction is a plastoquinone + NADH + (n+1) H(+)(in) = a plastoquinol + NAD(+) + n H(+)(out). The enzyme catalyses a plastoquinone + NADPH + (n+1) H(+)(in) = a plastoquinol + NADP(+) + n H(+)(out). In terms of biological role, NDH shuttles electrons from NAD(P)H:plastoquinone, via FMN and iron-sulfur (Fe-S) centers, to quinones in the photosynthetic chain and possibly in a chloroplast respiratory chain. The immediate electron acceptor for the enzyme in this species is believed to be plastoquinone. Couples the redox reaction to proton translocation, and thus conserves the redox energy in a proton gradient. The sequence is that of NAD(P)H-quinone oxidoreductase subunit H, chloroplastic from Nicotiana sylvestris (Wood tobacco).